The sequence spans 245 residues: 1-(5-phosphoribosyl)-5-[(5-phosphoribosylamino)methylideneamino] imidazole-4-carboxamide isomerase (245 aa).

The active-site Proton acceptor is the D8. D129 (proton donor) is an active-site residue.

Belongs to the HisA/HisF family.

The protein resides in the cytoplasm. The enzyme catalyses 1-(5-phospho-beta-D-ribosyl)-5-[(5-phospho-beta-D-ribosylamino)methylideneamino]imidazole-4-carboxamide = 5-[(5-phospho-1-deoxy-D-ribulos-1-ylimino)methylamino]-1-(5-phospho-beta-D-ribosyl)imidazole-4-carboxamide. The protein operates within amino-acid biosynthesis; L-histidine biosynthesis; L-histidine from 5-phospho-alpha-D-ribose 1-diphosphate: step 4/9. The polypeptide is 1-(5-phosphoribosyl)-5-[(5-phosphoribosylamino)methylideneamino] imidazole-4-carboxamide isomerase (Rhodopseudomonas palustris (strain ATCC BAA-98 / CGA009)).